We begin with the raw amino-acid sequence, 475 residues long: Probable L-cysteine desulfhydrase, chloroplastic (475 aa).

The N-terminal 24 residues, 1 to 24 (MASSLSPPEEASYHHRHTKRYTSS), are a transit peptide targeting the chloroplast. The interval 1–40 (MASSLSPPEEASYHHRHTKRYTSSASSASSTTNGTVESSV) is disordered. Residues 22-32 (TSSASSASSTT) are compositionally biased toward low complexity. Lys284 carries the N6-(pyridoxal phosphate)lysine modification.

The protein belongs to the class-V pyridoxal-phosphate-dependent aminotransferase family. Interacts in vitro with QS.

The protein resides in the plastid. Its subcellular location is the chloroplast. Its function is as follows. May catalyze the production of hydrogen sulfide (H2S) from cysteine. In Arabidopsis thaliana (Mouse-ear cress), this protein is Probable L-cysteine desulfhydrase, chloroplastic.